The primary structure comprises 124 residues: MKNVLIIFGKPYCSICENVSDAVEELKSEYDILHVDILSFFLKDGDSSMLGDVKRGTLIGNFAAHLSNYIVSIFKYNPQTKQMAFVDINKSLDFTKTDKSLVNLEILKSEIEKATYGVWPPVTE.

C13 and C16 are joined by a disulfide.

The protein belongs to the glutaredoxin family. Homodimer.

The protein localises to the host cytoplasm. Its function is as follows. Glutaredoxin necessary for virion morphogenesis and virus replication. Functions as a thiol-disulfide transfer protein between membrane-associated OPG128 and substrates OPG095 or OPG053. The complete pathway for formation of disulfide bonds in intracellular virion membrane proteins sequentially involves oxidation of OPG072, OPG128 and OPG088. Exhibit thioltransferase and dehydroascorbate reductase activities in vitro. The sequence is that of Glutaredoxin-2 (OPG088) from Oryctolagus cuniculus (Rabbit).